The following is a 327-amino-acid chain: Annexin A8 (327 aa).

4 Annexin repeats span residues 21-92, 93-164, 177-249, and 253-324; these read FNPD…ALMY, PPYR…CLLQ, GLAL…TVVK, and NVHS…NLVG. Ca(2+)-binding residues include Met-266, Gly-268, Gly-270, and Asp-310.

This sequence belongs to the annexin family.

Functionally, this protein is an anticoagulant protein that acts as an indirect inhibitor of the thromboplastin-specific complex, which is involved in the blood coagulation cascade. The protein is Annexin A8 (Anxa8) of Rattus norvegicus (Rat).